A 272-amino-acid polypeptide reads, in one-letter code: Hemin import ATP-binding protein HmuV (272 aa).

In terms of domain architecture, ABC transporter spans 2 to 255 (LNADHLHVAR…EPIARCYGFR (254 aa)). Residue 34–41 (GRNGAGKS) participates in ATP binding.

This sequence belongs to the ABC transporter superfamily. Heme (hemin) importer (TC 3.A.1.14.5) family. The complex is composed of two ATP-binding proteins (HmuV), two transmembrane proteins (HmuU) and a solute-binding protein (HmuT).

The protein resides in the cell inner membrane. In terms of biological role, part of the ABC transporter complex HmuTUV involved in hemin import. Responsible for energy coupling to the transport system. In Burkholderia mallei (strain ATCC 23344), this protein is Hemin import ATP-binding protein HmuV.